A 366-amino-acid polypeptide reads, in one-letter code: Histidinol-phosphate aminotransferase 1 (366 aa).

An N6-(pyridoxal phosphate)lysine modification is found at lysine 226.

The protein belongs to the class-II pyridoxal-phosphate-dependent aminotransferase family. Histidinol-phosphate aminotransferase subfamily. Homodimer. Requires pyridoxal 5'-phosphate as cofactor.

The enzyme catalyses L-histidinol phosphate + 2-oxoglutarate = 3-(imidazol-4-yl)-2-oxopropyl phosphate + L-glutamate. It functions in the pathway amino-acid biosynthesis; L-histidine biosynthesis; L-histidine from 5-phospho-alpha-D-ribose 1-diphosphate: step 7/9. This is Histidinol-phosphate aminotransferase 1 from Mannheimia succiniciproducens (strain KCTC 0769BP / MBEL55E).